We begin with the raw amino-acid sequence, 1013 residues long: Ephrin type-B receptor 6 (1013 aa).

Residues 1–31 (MASENTAGSGSRVAGMVYSLWLLVLGPSVLA) form the signal peptide. The Extracellular portion of the chain corresponds to 32–590 (LEEVLLDTTG…LPEKLSLVIG (559 aa)). The 199-residue stretch at 33–231 (EEVLLDTTGE…FSYTCPSVLR (199 aa)) folds into the Eph LBD domain. 2 Fibronectin type-III domains span residues 363–478 (PPSA…TSHE) and 479–574 (VPSA…TLPQ). N-linked (GlcNAc...) asparagine glycosylation occurs at asparagine 472. Residues 591–611 (SILGALAFLLLAAITVLAVIF) form a helical membrane-spanning segment. Topologically, residues 612-1013 (QRKRRGTGYT…HLRQPGSVEV (402 aa)) are cytoplasmic. The Protein kinase domain occupies 662-911 (IKIEEVIGAG…QLVAAFDKMI (250 aa)). 668-676 (IGAGSFGEV) is a binding site for ATP. The SAM domain maps to 940-1004 (PCLDSPQAWL…LHNIQLLQQH (65 aa)). The PDZ-binding signature appears at 1011 to 1013 (VEV).

Belongs to the protein kinase superfamily. Tyr protein kinase family. Ephrin receptor subfamily. In terms of assembly, interacts with CBL and EPHB1. Interacts with FYN; this interaction takes place in a ligand-independent manner. In terms of processing, ligand-binding increases phosphorylation on tyrosine residues. Phosphorylation on tyrosine residues is mediated by transphosphorylation by the catalytically active EPHB1 in a ligand-independent manner. Tyrosine phosphorylation of the receptor may act as a switch on the functional transition from cell adhesion/attraction to de-adhesion/repulsion.

The protein resides in the membrane. Its function is as follows. Kinase-defective receptor for members of the ephrin-B family. Binds to ephrin-B1 and ephrin-B2. Modulates cell adhesion and migration by exerting both positive and negative effects upon stimulation with ephrin-B2. Inhibits JNK activation, T-cell receptor-induced IL-2 secretion and CD25 expression upon stimulation with ephrin-B2. In Rattus norvegicus (Rat), this protein is Ephrin type-B receptor 6 (Ephb6).